A 137-amino-acid polypeptide reads, in one-letter code: Large ribosomal subunit protein uL24 (137 aa).

It belongs to the universal ribosomal protein uL24 family. As to quaternary structure, part of the 50S ribosomal subunit.

Functionally, one of two assembly initiator proteins, it binds directly to the 5'-end of the 23S rRNA, where it nucleates assembly of the 50S subunit. In terms of biological role, located at the polypeptide exit tunnel on the outside of the subunit. In Sulfurisphaera tokodaii (strain DSM 16993 / JCM 10545 / NBRC 100140 / 7) (Sulfolobus tokodaii), this protein is Large ribosomal subunit protein uL24.